The chain runs to 291 residues: ATP synthase gamma chain (291 aa).

Belongs to the ATPase gamma chain family. As to quaternary structure, F-type ATPases have 2 components, CF(1) - the catalytic core - and CF(0) - the membrane proton channel. CF(1) has five subunits: alpha(3), beta(3), gamma(1), delta(1), epsilon(1). CF(0) has three main subunits: a, b and c.

The protein resides in the cell inner membrane. In terms of biological role, produces ATP from ADP in the presence of a proton gradient across the membrane. The gamma chain is believed to be important in regulating ATPase activity and the flow of protons through the CF(0) complex. The chain is ATP synthase gamma chain from Neisseria meningitidis serogroup B (strain ATCC BAA-335 / MC58).